Here is a 332-residue protein sequence, read N- to C-terminus: tRNA-dihydrouridine synthase B (332 aa).

FMN is bound by residues 19 to 21 (PMA) and Gln73. Cys103 serves as the catalytic Proton donor. Residues Lys142, 203-205 (NGD), and 227-228 (GR) each bind FMN.

It belongs to the Dus family. DusB subfamily. The cofactor is FMN.

The catalysed reaction is a 5,6-dihydrouridine in tRNA + NAD(+) = a uridine in tRNA + NADH + H(+). The enzyme catalyses a 5,6-dihydrouridine in tRNA + NADP(+) = a uridine in tRNA + NADPH + H(+). In terms of biological role, catalyzes the synthesis of 5,6-dihydrouridine (D), a modified base found in the D-loop of most tRNAs, via the reduction of the C5-C6 double bond in target uridines. This chain is tRNA-dihydrouridine synthase B, found in Pseudomonas aeruginosa (strain ATCC 15692 / DSM 22644 / CIP 104116 / JCM 14847 / LMG 12228 / 1C / PRS 101 / PAO1).